The primary structure comprises 190 residues: 7-methyl-GTP pyrophosphatase (190 aa).

The active-site Proton acceptor is the D69.

The protein belongs to the Maf family. YceF subfamily. The cofactor is a divalent metal cation.

It localises to the cytoplasm. It carries out the reaction N(7)-methyl-GTP + H2O = N(7)-methyl-GMP + diphosphate + H(+). In terms of biological role, nucleoside triphosphate pyrophosphatase that hydrolyzes 7-methyl-GTP (m(7)GTP). May have a dual role in cell division arrest and in preventing the incorporation of modified nucleotides into cellular nucleic acids. In Xanthomonas oryzae pv. oryzae (strain MAFF 311018), this protein is 7-methyl-GTP pyrophosphatase.